Consider the following 236-residue polypeptide: uncharacterized protein (236 aa).

In terms of domain architecture, ABC transporter spans 4–225 (LLEASIEQAG…TGLEGQSLLD (222 aa)). 38-45 (GANGAGKS) contacts ATP.

It belongs to the ABC transporter superfamily.

This is an uncharacterized protein from Bacillus subtilis (strain 168).